A 458-amino-acid polypeptide reads, in one-letter code: Bifunctional protein GlmU (458 aa).

The segment at 1–228 is pyrophosphorylase; that stretch reads MHPKLDILIL…DWEVLGVNSK (228 aa). UDP-N-acetyl-alpha-D-glucosamine contacts are provided by residues 10-13, Lys-24, Gln-75, 80-81, 102-104, Gly-139, Glu-153, Asn-168, and Asn-226; these read LAAG, GT, and YGD. Asp-104 serves as a coordination point for Mg(2+). Asn-226 provides a ligand contact to Mg(2+). The tract at residues 229–249 is linker; sequence AQLAELERIHQNEVAQRLLAD. An N-acetyltransferase region spans residues 250 to 458; that stretch reads GVTLMDPARL…KRPIKPKKEG (209 aa). Residues Arg-332 and Lys-350 each coordinate UDP-N-acetyl-alpha-D-glucosamine. Catalysis depends on His-362, which acts as the Proton acceptor. UDP-N-acetyl-alpha-D-glucosamine is bound by residues Tyr-365 and Asn-376. Residues Ala-379, 385–386, Ser-404, Ala-422, and Arg-439 each bind acetyl-CoA; that span reads NY.

This sequence in the N-terminal section; belongs to the N-acetylglucosamine-1-phosphate uridyltransferase family. It in the C-terminal section; belongs to the transferase hexapeptide repeat family. As to quaternary structure, homotrimer. Mg(2+) is required as a cofactor.

Its subcellular location is the cytoplasm. It carries out the reaction alpha-D-glucosamine 1-phosphate + acetyl-CoA = N-acetyl-alpha-D-glucosamine 1-phosphate + CoA + H(+). It catalyses the reaction N-acetyl-alpha-D-glucosamine 1-phosphate + UTP + H(+) = UDP-N-acetyl-alpha-D-glucosamine + diphosphate. It participates in nucleotide-sugar biosynthesis; UDP-N-acetyl-alpha-D-glucosamine biosynthesis; N-acetyl-alpha-D-glucosamine 1-phosphate from alpha-D-glucosamine 6-phosphate (route II): step 2/2. It functions in the pathway nucleotide-sugar biosynthesis; UDP-N-acetyl-alpha-D-glucosamine biosynthesis; UDP-N-acetyl-alpha-D-glucosamine from N-acetyl-alpha-D-glucosamine 1-phosphate: step 1/1. The protein operates within bacterial outer membrane biogenesis; LPS lipid A biosynthesis. Functionally, catalyzes the last two sequential reactions in the de novo biosynthetic pathway for UDP-N-acetylglucosamine (UDP-GlcNAc). The C-terminal domain catalyzes the transfer of acetyl group from acetyl coenzyme A to glucosamine-1-phosphate (GlcN-1-P) to produce N-acetylglucosamine-1-phosphate (GlcNAc-1-P), which is converted into UDP-GlcNAc by the transfer of uridine 5-monophosphate (from uridine 5-triphosphate), a reaction catalyzed by the N-terminal domain. The polypeptide is Bifunctional protein GlmU (Thiobacillus denitrificans (strain ATCC 25259 / T1)).